A 309-amino-acid polypeptide reads, in one-letter code: GATA transcription factor 25 (309 aa).

The disordered stretch occupies residues 1-35; the sequence is MFGRHSIIPNNQIGTASASAGEDHVSASATSGHIP. Residues 8–18 show a composition bias toward polar residues; it reads IPNNQIGTASA. Residues 77-112 form the Tify domain; it reads PPEGANQLTISFRGQVYVFDAVGADKVDAVLSLLGG. The region spanning 146-188 is the CCT domain; sequence RAQSLDRFRKKRNARCFEKKVRYGVRQEVALRMARNKGQFTSS. Over residues 187–202 the composition is skewed to polar residues; the sequence is SSKMTDGAYNSGTDQD. Positions 187 to 207 are disordered; the sequence is SSKMTDGAYNSGTDQDSAQDD. The GATA-type zinc-finger motif lies at 208 to 267; sequence AHPEISCTHCGISSKCTPMMRRGPSGPRTLCNACGLFWANRGTLRDLSKKTEENQLALMK. Residues 290–309 form a disordered region; that stretch reads EHTSMVSLANGDNSNLLGDH. A compositionally biased stretch (polar residues) spans 293–309; it reads SMVSLANGDNSNLLGDH.

Belongs to the type IV zinc-finger family. Class C subfamily. In terms of tissue distribution, predominantly expressed in shoot apices, inflorescences and roots.

It is found in the nucleus. Its function is as follows. Transcriptional activator that specifically binds 5'-GATA-3' or 5'-GAT-3' motifs within gene promoters. This chain is GATA transcription factor 25 (GATA25), found in Arabidopsis thaliana (Mouse-ear cress).